A 371-amino-acid polypeptide reads, in one-letter code: Dual-specificity RNA methyltransferase RlmN (371 aa).

E99 functions as the Proton acceptor in the catalytic mechanism. Residues 106 to 333 form the Radical SAM core domain; sequence DDNRATLCIS…AIRRASKGQD (228 aa). A disulfide bridge links C113 with C338. 3 residues coordinate [4Fe-4S] cluster: C120, C124, and C127. S-adenosyl-L-methionine-binding positions include 165 to 166, S197, 219 to 221, and N295; these read GE and SLN. C338 serves as the catalytic S-methylcysteine intermediate. The interval 345–371 is disordered; that stretch reads LTVSPPAQESERNSARPDRSQGKGKHL. The segment covering 353–365 has biased composition (basic and acidic residues); the sequence is ESERNSARPDRSQ.

Belongs to the radical SAM superfamily. RlmN family. Requires [4Fe-4S] cluster as cofactor.

It is found in the cytoplasm. It catalyses the reaction adenosine(2503) in 23S rRNA + 2 reduced [2Fe-2S]-[ferredoxin] + 2 S-adenosyl-L-methionine = 2-methyladenosine(2503) in 23S rRNA + 5'-deoxyadenosine + L-methionine + 2 oxidized [2Fe-2S]-[ferredoxin] + S-adenosyl-L-homocysteine. It carries out the reaction adenosine(37) in tRNA + 2 reduced [2Fe-2S]-[ferredoxin] + 2 S-adenosyl-L-methionine = 2-methyladenosine(37) in tRNA + 5'-deoxyadenosine + L-methionine + 2 oxidized [2Fe-2S]-[ferredoxin] + S-adenosyl-L-homocysteine. Functionally, specifically methylates position 2 of adenine 2503 in 23S rRNA and position 2 of adenine 37 in tRNAs. m2A2503 modification seems to play a crucial role in the proofreading step occurring at the peptidyl transferase center and thus would serve to optimize ribosomal fidelity. This chain is Dual-specificity RNA methyltransferase RlmN, found in Syntrophotalea carbinolica (strain DSM 2380 / NBRC 103641 / GraBd1) (Pelobacter carbinolicus).